The primary structure comprises 105 residues: UPF0235 protein RPR_04990 (105 aa).

The protein belongs to the UPF0235 family.

This Rickettsia peacockii (strain Rustic) protein is UPF0235 protein RPR_04990.